Reading from the N-terminus, the 232-residue chain is Phosphatidylserine decarboxylase proenzyme (232 aa).

Ser190 functions as the Schiff-base intermediate with substrate; via pyruvic acid in the catalytic mechanism. A Pyruvic acid (Ser); by autocatalysis modification is found at Ser190.

The protein belongs to the phosphatidylserine decarboxylase family. PSD-A subfamily. Heterodimer of a large membrane-associated beta subunit and a small pyruvoyl-containing alpha subunit. It depends on pyruvate as a cofactor. Is synthesized initially as an inactive proenzyme. Formation of the active enzyme involves a self-maturation process in which the active site pyruvoyl group is generated from an internal serine residue via an autocatalytic post-translational modification. Two non-identical subunits are generated from the proenzyme in this reaction, and the pyruvate is formed at the N-terminus of the alpha chain, which is derived from the carboxyl end of the proenzyme. The post-translation cleavage follows an unusual pathway, termed non-hydrolytic serinolysis, in which the side chain hydroxyl group of the serine supplies its oxygen atom to form the C-terminus of the beta chain, while the remainder of the serine residue undergoes an oxidative deamination to produce ammonia and the pyruvoyl prosthetic group on the alpha chain.

It is found in the cell membrane. It carries out the reaction a 1,2-diacyl-sn-glycero-3-phospho-L-serine + H(+) = a 1,2-diacyl-sn-glycero-3-phosphoethanolamine + CO2. Its pathway is phospholipid metabolism; phosphatidylethanolamine biosynthesis; phosphatidylethanolamine from CDP-diacylglycerol: step 2/2. Catalyzes the formation of phosphatidylethanolamine (PtdEtn) from phosphatidylserine (PtdSer). The protein is Phosphatidylserine decarboxylase proenzyme of Mesorhizobium japonicum (strain LMG 29417 / CECT 9101 / MAFF 303099) (Mesorhizobium loti (strain MAFF 303099)).